We begin with the raw amino-acid sequence, 82 residues long: Penaeidin-3d (82 aa).

Residues 1–19 (MRLVVCLVFLASFALVCQG) form the signal peptide. Glutamine 20 carries the post-translational modification Pyrrolidone carboxylic acid. 3 disulfides stabilise this stretch: cysteine 51/cysteine 66, cysteine 55/cysteine 73, and cysteine 67/cysteine 74. Residue serine 81 is modified to Serine amide.

This sequence belongs to the penaeidin family.

The protein resides in the cytoplasmic granule. In terms of biological role, antibacterial and antifungal activity. Presents chitin-binding activity. This is Penaeidin-3d from Penaeus vannamei (Whiteleg shrimp).